Consider the following 417-residue polypeptide: Cytochrome b-c1 complex subunit 2, mitochondrial (417 aa).

The transit peptide at 1 to 22 (MTRGVPRLAVAARHFSTAEAAG) directs the protein to the mitochondrion.

This sequence belongs to the peptidase M16 family. UQCRC2/QCR2 subfamily. In terms of assembly, component of the ubiquinol-cytochrome c oxidoreductase (cytochrome b-c1 complex, complex III, CIII), a multisubunit enzyme composed of 3 respiratory subunits cytochrome b, cytochrome c1 and Rieske protein, 2 core protein subunits, and additional low-molecular weight protein subunits. The complex exists as an obligatory dimer and forms supercomplexes (SCs) in the inner mitochondrial membrane with cytochrome c oxidase (complex IV, CIV).

It is found in the mitochondrion inner membrane. Functionally, component of the ubiquinol-cytochrome c oxidoreductase, a multisubunit transmembrane complex that is part of the mitochondrial electron transport chain which drives oxidative phosphorylation. The respiratory chain contains 3 multisubunit complexes succinate dehydrogenase (complex II, CII), ubiquinol-cytochrome c oxidoreductase (cytochrome b-c1 complex, complex III, CIII) and cytochrome c oxidase (complex IV, CIV), that cooperate to transfer electrons derived from NADH and succinate to molecular oxygen, creating an electrochemical gradient over the inner membrane that drives transmembrane transport and the ATP synthase. The cytochrome b-c1 complex catalyzes electron transfer from ubiquinol to cytochrome c, linking this redox reaction to translocation of protons across the mitochondrial inner membrane, with protons being carried across the membrane as hydrogens on the quinol. In the process called Q cycle, 2 protons are consumed from the matrix, 4 protons are released into the intermembrane space and 2 electrons are passed to cytochrome c. In Yarrowia lipolytica (strain CLIB 122 / E 150) (Yeast), this protein is Cytochrome b-c1 complex subunit 2, mitochondrial (QCR2).